An 883-amino-acid chain; its full sequence is DNA mismatch repair protein MutS (883 aa).

The disordered stretch occupies residues 1–25 (MSDSVAPDVPVIREGKNPAQHRDRT). Positions 11–25 (VIREGKNPAQHRDRT) are enriched in basic and acidic residues. 664–671 (GPNASGKS) is an ATP binding site. The segment at 857 to 883 (RKGNTQPRARKSSAETEAKTQQFELPF) is disordered.

Belongs to the DNA mismatch repair MutS family.

This protein is involved in the repair of mismatches in DNA. It is possible that it carries out the mismatch recognition step. This protein has a weak ATPase activity. This Acaryochloris marina (strain MBIC 11017) protein is DNA mismatch repair protein MutS.